A 341-amino-acid polypeptide reads, in one-letter code: UDP-N-acetylglucosamine--N-acetylmuramyl-(pentapeptide) pyrophosphoryl-undecaprenol N-acetylglucosamine transferase (341 aa).

Residues 10–12 (TGG), Asn124, Ser177, and Gln275 each bind UDP-N-acetyl-alpha-D-glucosamine.

It belongs to the glycosyltransferase 28 family. MurG subfamily.

The protein localises to the cell inner membrane. The catalysed reaction is di-trans,octa-cis-undecaprenyl diphospho-N-acetyl-alpha-D-muramoyl-L-alanyl-D-glutamyl-meso-2,6-diaminopimeloyl-D-alanyl-D-alanine + UDP-N-acetyl-alpha-D-glucosamine = di-trans,octa-cis-undecaprenyl diphospho-[N-acetyl-alpha-D-glucosaminyl-(1-&gt;4)]-N-acetyl-alpha-D-muramoyl-L-alanyl-D-glutamyl-meso-2,6-diaminopimeloyl-D-alanyl-D-alanine + UDP + H(+). It participates in cell wall biogenesis; peptidoglycan biosynthesis. Functionally, cell wall formation. Catalyzes the transfer of a GlcNAc subunit on undecaprenyl-pyrophosphoryl-MurNAc-pentapeptide (lipid intermediate I) to form undecaprenyl-pyrophosphoryl-MurNAc-(pentapeptide)GlcNAc (lipid intermediate II). In Campylobacter hominis (strain ATCC BAA-381 / DSM 21671 / CCUG 45161 / LMG 19568 / NCTC 13146 / CH001A), this protein is UDP-N-acetylglucosamine--N-acetylmuramyl-(pentapeptide) pyrophosphoryl-undecaprenol N-acetylglucosamine transferase.